A 467-amino-acid polypeptide reads, in one-letter code: ATP-dependent rRNA helicase rrp3 (467 aa).

Positions methionine 1–lysine 48 are disordered. The Q motif motif lies at lysine 48–arginine 76. The Helicase ATP-binding domain occupies isoleucine 79–valine 250. Alanine 92–threonine 99 serves as a coordination point for ATP. The short motif at aspartate 198–aspartate 201 is the DEAD box element. In terms of domain architecture, Helicase C-terminal spans threonine 262–methionine 422. The disordered stretch occupies residues methionine 439–glycine 467.

The protein belongs to the DEAD box helicase family. DDX47/RRP3 subfamily. In terms of assembly, interacts with the SSU processome.

It is found in the nucleus. The enzyme catalyses ATP + H2O = ADP + phosphate + H(+). Its function is as follows. ATP-dependent rRNA helicase required for pre-ribosomal RNA processing. Involved in the maturation of the 35S-pre-rRNA and to its cleavage to mature 18S rRNA. The sequence is that of ATP-dependent rRNA helicase rrp3 from Aspergillus niger (strain ATCC MYA-4892 / CBS 513.88 / FGSC A1513).